Reading from the N-terminus, the 287-residue chain is NADH-cytochrome b5 reductase 1 (287 aa).

The chain crosses the membrane as a helical span at residues 5-25 (FEALVTALVLAVSFIFIYGKF). The 105-residue stretch at 41–145 (KDWQEFSLLT…RGPKGFYHYE (105 aa)) folds into the FAD-binding FR-type domain. Residues 125 to 142 (AELAIGDRIKVRGPKGFY) and 151 to 183 (EIGMIAGGTGISPMYQIIRAIFSNPRDKTRVCL) contribute to the FAD site.

The protein belongs to the flavoprotein pyridine nucleotide cytochrome reductase family. Monomer. Component of the 2-(3-amino-3-carboxypropyl)histidine synthase complex composed of DPH1, DPH2, DPH3 and a NADH-dependent reductase, predominantly CBR1. The cofactor is FAD.

It localises to the mitochondrion outer membrane. The enzyme catalyses 2 Fe(III)-[cytochrome b5] + NADH = 2 Fe(II)-[cytochrome b5] + NAD(+) + H(+). It carries out the reaction 2 Fe(3+)-[Dph3] + NADH = 2 Fe(2+)-[Dph3] + NAD(+) + H(+). Its pathway is protein modification; peptidyl-diphthamide biosynthesis. In terms of biological role, NADH-dependent reductase for DPH3 and cytochrome b5. Required for the first step of diphthamide biosynthesis, a post-translational modification of histidine which occurs in elongation factor 2. DPH1 and DPH2 transfer a 3-amino-3-carboxypropyl (ACP) group from S-adenosyl-L-methionine (SAM) to a histidine residue, the reaction is assisted by a reduction system comprising DPH3 and a NADH-dependent reductase, predominantly CBR1. By reducing DPH3, also involved in the formation of the tRNA wobble base modification mcm5s 2U (5-methoxycarbonylmethyl-2-thiouridine), mediated by the elongator complex. The cytochrome b5/NADH cytochrome b5 reductase electron transfer system supports the catalytic activity of several sterol biosynthetic enzymes. In Eremothecium gossypii (strain ATCC 10895 / CBS 109.51 / FGSC 9923 / NRRL Y-1056) (Yeast), this protein is NADH-cytochrome b5 reductase 1 (CBR1).